Reading from the N-terminus, the 248-residue chain is Sugar fermentation stimulation protein homolog (248 aa).

This sequence belongs to the SfsA family.

In Methylorubrum extorquens (strain CM4 / NCIMB 13688) (Methylobacterium extorquens), this protein is Sugar fermentation stimulation protein homolog.